Here is a 149-residue protein sequence, read N- to C-terminus: UPF0178 protein SE_0451 (149 aa).

It belongs to the UPF0178 family.

The protein is UPF0178 protein SE_0451 of Staphylococcus epidermidis (strain ATCC 12228 / FDA PCI 1200).